We begin with the raw amino-acid sequence, 89 residues long: Small ribosomal subunit protein uS15 (89 aa).

The protein belongs to the universal ribosomal protein uS15 family. In terms of assembly, part of the 30S ribosomal subunit. Forms a bridge to the 50S subunit in the 70S ribosome, contacting the 23S rRNA.

Its function is as follows. One of the primary rRNA binding proteins, it binds directly to 16S rRNA where it helps nucleate assembly of the platform of the 30S subunit by binding and bridging several RNA helices of the 16S rRNA. Functionally, forms an intersubunit bridge (bridge B4) with the 23S rRNA of the 50S subunit in the ribosome. This is Small ribosomal subunit protein uS15 from Gloeothece citriformis (strain PCC 7424) (Cyanothece sp. (strain PCC 7424)).